The chain runs to 301 residues: Phosphatidylglycerol--prolipoprotein diacylglyceryl transferase (301 aa).

The next 4 helical transmembrane spans lie at 10-30 (IAFS…LAGF), 57-77 (LLFY…MLFY), 92-112 (VWEG…AVAW), and 119-139 (MHMF…LGFG). A 1,2-diacyl-sn-glycero-3-phospho-(1'-sn-glycerol) is bound at residue R140. 3 helical membrane passes run 202-222 (PSQL…LWLF), 230-250 (YAVS…VEFV), and 264-284 (LTRG…LFWL).

The protein belongs to the Lgt family.

Its subcellular location is the cell inner membrane. It carries out the reaction L-cysteinyl-[prolipoprotein] + a 1,2-diacyl-sn-glycero-3-phospho-(1'-sn-glycerol) = an S-1,2-diacyl-sn-glyceryl-L-cysteinyl-[prolipoprotein] + sn-glycerol 1-phosphate + H(+). Its pathway is protein modification; lipoprotein biosynthesis (diacylglyceryl transfer). In terms of biological role, catalyzes the transfer of the diacylglyceryl group from phosphatidylglycerol to the sulfhydryl group of the N-terminal cysteine of a prolipoprotein, the first step in the formation of mature lipoproteins. The sequence is that of Phosphatidylglycerol--prolipoprotein diacylglyceryl transferase from Xylella fastidiosa (strain M12).